A 202-amino-acid polypeptide reads, in one-letter code: Putative NAD(P)H nitroreductase YodC (202 aa).

FMN is bound by residues 11 to 13 (RAS), 68 to 70 (QKQ), 155 to 156 (GG), and arginine 192.

This sequence belongs to the nitroreductase family. Requires FMN as cofactor.

It localises to the cytoplasm. Its function is as follows. Putative nitroreductase that may contribute to the degradation of aromatic compounds. The polypeptide is Putative NAD(P)H nitroreductase YodC (yodC) (Bacillus subtilis (strain 168)).